The primary structure comprises 169 residues: Styrene-oxide isomerase (169 aa).

4 helical membrane passes run 13–33 (GILM…HLVG), 61–81 (PALN…LGFA), 85–105 (PHLL…FYFF), and 129–149 (FLAL…LAVI).

It localises to the membrane. The enzyme catalyses styrene oxide = 2-phenylacetaldehyde. It functions in the pathway aromatic compound metabolism. In terms of biological role, epoxystyrene isomerase that catalyzes the second step in the aerobic styrene degradation pathway by converting epoxystyrene to phenylacetaldehyde. This is Styrene-oxide isomerase (styC) from Pseudomonas fluorescens.